We begin with the raw amino-acid sequence, 447 residues long: Ribosomal protein uS12 methylthiotransferase RimO (447 aa).

Positions 15–125 (PRVGFVSLGC…VMQAIHRHLP (111 aa)) constitute an MTTase N-terminal domain. [4Fe-4S] cluster-binding residues include C24, C60, C89, C156, C160, and C163. Residues 142–379 (LTPKHYAYLK…MQWQEEISKK (238 aa)) enclose the Radical SAM core domain. A TRAM domain is found at 379–447 (KRLAGKKGRI…GIHDLWAKKI (69 aa)).

It belongs to the methylthiotransferase family. RimO subfamily. [4Fe-4S] cluster serves as cofactor.

It is found in the cytoplasm. It carries out the reaction L-aspartate(89)-[ribosomal protein uS12]-hydrogen + (sulfur carrier)-SH + AH2 + 2 S-adenosyl-L-methionine = 3-methylsulfanyl-L-aspartate(89)-[ribosomal protein uS12]-hydrogen + (sulfur carrier)-H + 5'-deoxyadenosine + L-methionine + A + S-adenosyl-L-homocysteine + 2 H(+). In terms of biological role, catalyzes the methylthiolation of an aspartic acid residue of ribosomal protein uS12. The polypeptide is Ribosomal protein uS12 methylthiotransferase RimO (Nitrosomonas europaea (strain ATCC 19718 / CIP 103999 / KCTC 2705 / NBRC 14298)).